A 359-amino-acid chain; its full sequence is Olfactory receptor 5T2 (359 aa).

Over 1–64 (MSYSIYKSTV…GFTDNLELQT (64 aa)) the chain is Extracellular. Asn44 is a glycosylation site (N-linked (GlcNAc...) asparagine). A helical membrane pass occupies residues 65–85 (IFFFLFLAIYLFTLMGNLGLI). Over 86 to 93 (LVVIRDSQ) the chain is Cytoplasmic. Residues 94-114 (LHKPMYYFLSMLSSVDACYSS) traverse the membrane as a helical segment. Topologically, residues 115–138 (VITPNMLVDFTTKNKVISFLGCVA) are extracellular. The chain crosses the membrane as a helical span at residues 139–159 (QVFLACSFGTTECFLLAAMAY). Residues 160-178 (DRYVAIYNPLLYSVSMSPR) lie on the Cytoplasmic side of the membrane. The helical transmembrane segment at 179–199 (VYMPLINASYVAGILHATIHT) threads the bilayer. At 200–235 (VATFSLSFCGANEIRRVFCDIPPLLAISYSDTHTNQ) the chain is on the extracellular side. A helical membrane pass occupies residues 236–256 (LLLFYFVGSIELVTILIVLIS). Over 257 to 276 (YGLILLAILKMYSAEGRRKV) the chain is Cytoplasmic. Residues 277-297 (FSTCGAHLTGVSIYYGTILFM) traverse the membrane as a helical segment. Residues 298 to 310 (YVRPSSSYASDHD) are Extracellular-facing. Residues 311-331 (MIVSIFYTIVIPLLNPVIYSL) form a helical membrane-spanning segment. Topologically, residues 332-359 (RNKDVKDSMKKMFGKNQVINKVYFHTKK) are cytoplasmic.

This sequence belongs to the G-protein coupled receptor 1 family.

The protein resides in the cell membrane. In terms of biological role, odorant receptor. This Homo sapiens (Human) protein is Olfactory receptor 5T2 (OR5T2).